A 324-amino-acid polypeptide reads, in one-letter code: Olfactory receptor 5T17 (324 aa).

At 1 to 37 (MPRTPSYTNTKTTQVNNVTEITVFILLGFTDDVDMNI) the chain is on the extracellular side. The N-linked (GlcNAc...) asparagine glycan is linked to N17. A helical membrane pass occupies residues 38–58 (FLFILFLAIYVVTLIGNLGLV). At 59–66 (VLVIEDSR) the chain is on the cytoplasmic side. A helical transmembrane segment spans residues 67 to 87 (LHNPMYYFLTVLSSLDACFSS). Topologically, residues 88–111 (VLTPKMLVNFLSKNKSISFAGCAT) are extracellular. N101 is a glycosylation site (N-linked (GlcNAc...) asparagine). Cysteines 109 and 201 form a disulfide. A helical membrane pass occupies residues 112 to 132 (QMLLFVTFGTTECFLLAAMAY). At 133 to 145 (DRYLAIYSPLLYA) the chain is on the cytoplasmic side. Residues 146 to 166 (VRMSPRVYVPLIIASYTGGIL) form a helical membrane-spanning segment. The Extracellular segment spans residues 167–208 (HATIHTVATFSLSFCGSNEIRHVFCDIPPLLALSCSDTHLNQ). The helical transmembrane segment at 209–229 (LLLFYCAGSIELITILIVLVS) threads the bilayer. Topologically, residues 230–249 (YGFVLLAILKINSAEGRRKI) are cytoplasmic. The helical transmembrane segment at 250-270 (FSTCGAHLTGVSIFHGTILFM) threads the bilayer. At 271 to 283 (YVRPSSNYTLEQD) the chain is on the extracellular side. An N-linked (GlcNAc...) asparagine glycan is attached at N277. Residues 284 to 304 (MVVSTFYTIVIPMLNPIIYSL) traverse the membrane as a helical segment. The Cytoplasmic portion of the chain corresponds to 305-324 (RNKDVKEAMRKLLKRKLVHE).

This sequence belongs to the G-protein coupled receptor 1 family.

The protein resides in the cell membrane. In terms of biological role, potential odorant receptor. The polypeptide is Olfactory receptor 5T17 (Mus musculus (Mouse)).